The primary structure comprises 160 residues: Cyclic di-GMP-binding protein Smlt4090 (160 aa).

3',3'-c-di-GMP is bound by residues Lys-33, Lys-132, Arg-134, Asp-135, and Asp-160.

Belongs to the YajQ family.

In terms of biological role, cyclic di-GMP effector that significantly contributes to virulence. Binds bis-(3',5')-cyclic diguanylate (cyclic di-GMP or c-di-GMP), an important bacterial second messenger that controls a wide range of cellular processes. In Stenotrophomonas maltophilia (strain K279a), this protein is Cyclic di-GMP-binding protein Smlt4090.